Here is a 465-residue protein sequence, read N- to C-terminus: Serine carboxypeptidase-like 46 (465 aa).

Positions 1–25 are cleaved as a signal peptide; sequence MPRLQCLTMATSLILLLQALSLVSS. 3 disulfides stabilise this stretch: Cys-88–Cys-344, Cys-245–Cys-263, and Cys-288–Cys-313. 2 N-linked (GlcNAc...) asparagine glycosylation sites follow: Asn-137 and Asn-170. Ser-179 is a catalytic residue. An N-linked (GlcNAc...) asparagine glycan is attached at Asn-246. Active-site residues include Asp-381 and His-438.

It belongs to the peptidase S10 family. As to expression, ubiquitous.

Its subcellular location is the secreted. Probable carboxypeptidase. In Arabidopsis thaliana (Mouse-ear cress), this protein is Serine carboxypeptidase-like 46 (SCPL46).